A 1076-amino-acid polypeptide reads, in one-letter code: Nucleoporin NUP1 (1076 aa).

The segment covering 1-11 (MSSNTSSVMSS) has biased composition (low complexity). The tract at residues 1-39 (MSSNTSSVMSSPRVEKRSFSSTLKSFFTNPNKKRPSSKK) is disordered. An N-acetylserine modification is found at Ser-2. The segment covering 19–30 (FSSTLKSFFTNP) has biased composition (polar residues). Residues Ser-54 and Ser-161 each carry the phosphoserine modification. Disordered regions lie at residues 143-183 (SQSK…TNVG) and 224-260 (KKDN…ATGP). 2 stretches are compositionally biased toward polar residues: residues 154-170 (LCTS…SCTR) and 243-260 (NRNN…ATGP). The FXF 1 repeat unit spans residues 336–338 (FDF). Phosphothreonine is present on Thr-381. Position 383 is a phosphoserine (Ser-383). The stretch at 384-386 (FNF) is one FXF 2 repeat. The interval 403-518 (TTLFNFGGKS…SFVFGASDKQ (116 aa)) is disordered. FXFG repeat units follow at residues 406–409 (FNFG) and 422–425 (FKFG). Residues 426–439 (KTSEKSENHTESDA) show a composition bias toward basic and acidic residues. FXFG repeat units follow at residues 448–451 (FSFG) and 484–487 (FDFG). Over residues 488–505 (KTGDQKETKKGESEKDAS) the composition is skewed to basic and acidic residues. FXFG repeat units follow at residues 510 to 513 (FVFG), 525 to 528 (FTFG), 543 to 546 (FTFG), and 571 to 574 (FTFG). The disordered stretch occupies residues 548 to 743 (AATAKETHTK…SMKSTASTAA (196 aa)). 4 FXF repeats span residues 591 to 593 (FSF), 614 to 616 (FSF), 636 to 638 (FSF), and 657 to 659 (FTF). Composition is skewed to polar residues over residues 634-649 (PTFS…SSVV) and 658-667 (TFASSKTSQP). At Ser-637 the chain carries Phosphoserine. One copy of the FXFG 9 repeat lies at 671–674 (FSFG). Residues 689–691 (FSF) form an FXF 7 repeat. FXFG repeat units follow at residues 708–711 (FTFG) and 727–730 (FSFG). A compositionally biased stretch (low complexity) spans 708-723 (FTFGGSTTNNTTTTST). Residues 753–755 (FSF) form an FXF 8 repeat. The stretch at 800–803 (FSFG) is one FXFG 12 repeat. FXF repeat units follow at residues 819–821 (FSF) and 866–868 (FGF). The stretch at 885 to 888 (FNFG) is one FXFG 13 repeat. One copy of the FXF 11 repeat lies at 929–931 (FNF). Residues 940 to 979 (GGSVFNMNGNTNANTVFAGSNNQPHQSQTPSFNTNSSFTP) are disordered. The segment covering 944–964 (FNMNGNTNANTVFAGSNNQPH) has biased composition (polar residues). A compositionally biased stretch (low complexity) spans 965–979 (QSQTPSFNTNSSFTP). 3 FG repeats span residues 1008–1009 (FG), 1027–1028 (FG), and 1038–1039 (FG). Residues 1025–1054 (SIFGGAGGVPTTSFGQPQSAPNQMGMGTNN) are disordered. Residues 1034–1045 (PTTSFGQPQSAP) are compositionally biased toward polar residues. Residues 1040 to 1076 (QPQSAPNQMGMGTNNGMSMGGGVMANRKIARMRHSKR) form an interaction with KAP95 region.

Component of the nuclear pore complex (NPC). NPC constitutes the exclusive means of nucleocytoplasmic transport. NPCs allow the passive diffusion of ions and small molecules and the active, nuclear transport receptor-mediated bidirectional transport of macromolecules such as proteins, RNAs, ribonucleoparticles (RNPs), and ribosomal subunits across the nuclear envelope. Due to its 8-fold rotational symmetry, all subunits are present with 8 copies or multiples thereof. Interacts through its FG repeats with nuclear transport receptors. Binds to the nuclear basket of the NPC through NUP60. Interacts with KAP122. Phosphorylated by CDC28.

Its subcellular location is the nucleus. The protein resides in the nuclear pore complex. It is found in the nucleus membrane. Functionally, functions as a component of the nuclear pore complex (NPC). NPC components, collectively referred to as nucleoporins (NUPs), can play the role of both NPC structural components and of docking or interaction partners for transiently associated nuclear transport factors. Active directional transport is assured by both, a Phe-Gly (FG) repeat affinity gradient for these transport factors across the NPC and a transport cofactor concentration gradient across the nuclear envelope (GSP1 and GSP2 GTPases associated predominantly with GTP in the nucleus, with GDP in the cytoplasm). As one of the FG repeat nucleoporins NUP1 is involved in interactions with and guidance of nuclear transport receptors such as SRP1-KAP95 (importin alpha and beta) through the NPC. Like the closely related NUP2 it also plays an important role in disassembling and recycling SRP1-KAP95 to the cytoplasm after nuclear import. Upon entry of the heterotrimeric SRP1-KAP95-cargo complex in the nucleus, NUP1 binds through its C-terminus to KAP95, thus accelerating the release of KAP95 and, indirectly, of the nuclear localization signal (NLS)-containing cargo from the SRP1-KAP95-cargo complex. The sequence is that of Nucleoporin NUP1 (NUP1) from Saccharomyces cerevisiae (strain ATCC 204508 / S288c) (Baker's yeast).